The sequence spans 122 residues: Prefoldin subunit 1 (122 aa).

It belongs to the prefoldin subunit beta family. In terms of assembly, heterohexamer of two PFD-alpha type and four PFD-beta type subunits.

Functionally, binds specifically to cytosolic chaperonin (c-CPN) and transfers target proteins to it. Binds to nascent polypeptide chain and promotes folding in an environment in which there are many competing pathways for nonnative proteins. This chain is Prefoldin subunit 1 (pfdn1), found in Danio rerio (Zebrafish).